A 486-amino-acid chain; its full sequence is Histamine H1 receptor (486 aa).

Residues 1–29 (MSFANTSSTFEDKMCEGNRTAMASPQLLP) lie on the Extracellular side of the membrane. Residues N5 and N18 are each glycosylated (N-linked (GlcNAc...) asparagine). The helical transmembrane segment at 30 to 50 (LVVVLSSISLVTVGLNLLVLY) threads the bilayer. At 51-64 (AVHSERKLHTVGNL) the chain is on the cytoplasmic side. Residues 65–89 (YIVSLSVADLIVGAVVMPMNILYLI) form a helical membrane-spanning segment. Topologically, residues 90 to 97 (MTKWSLGR) are extracellular. The chain crosses the membrane as a helical span at residues 98 to 123 (PLCLFWLSMDYVASTASIFSVFILCI). C100 and C180 are oxidised to a cystine. Histamine is bound by residues D107 and T112. Residues 107–112 (DYVAST) are important for agonist binding. Residues 124–144 (DRYRSVQQPLRYLRYRTKTRA) lie on the Cytoplasmic side of the membrane. 2 positions are modified to phosphothreonine: T140 and T142. The chain crosses the membrane as a helical span at residues 145–164 (SATILGAWFFSFLWVIPILG). The Extracellular segment spans residues 165–188 (WHHFMPPAPELREDKCETDFYNVT). The helical transmembrane segment at 189–211 (WFKIMTAIINFYLPTLLMLWFYV) threads the bilayer. N198 is a binding site for histamine. At 212 to 415 (KIYKAVRRHC…LNRERKAAKQ (204 aa)) the chain is on the cytoplasmic side. Position 230 is a phosphoserine (S230). Positions 241–253 (SDDTKEGAKKPGR) are enriched in basic and acidic residues. Disordered stretches follow at residues 241–295 (SDDT…GERE) and 310–379 (VAEG…RSGS). 2 positions are modified to phosphoserine: S342 and S345. The segment covering 347-365 (DQTLVDQQSFSRTTDSDTS) has biased composition (polar residues). Phosphoserine is present on residues S379, S381, S395, and S397. Residues 416-439 (LGFIMAAFILCWIPYFIFFMVIAF) traverse the membrane as a helical segment. Residues 423–427 (FILCW) are important for agonist binding. Y430 serves as a coordination point for histamine. An intrachain disulfide couples C440 to C443. The Extracellular portion of the chain corresponds to 440–445 (CKSCCS). Residues 446-468 (EPMHMFTIWLGYINSTLNPLIYP) form a helical membrane-spanning segment. Residues 469–486 (LCNENFKKTFKKILHIRS) are Cytoplasmic-facing.

It belongs to the G-protein coupled receptor 1 family. Phosphorylation at sites in the second and third cytoplasmic loops independently contribute to agonist-induced receptor down-regulation.

The protein resides in the cell membrane. G-protein-coupled receptor for histamine, a biogenic amine that functions as an immune modulator and a neurotransmitter. Through the H1 receptor, histamine mediates the contraction of smooth muscles and increases capillary permeability due to contraction of terminal venules. Also mediates neurotransmission in the central nervous system and thereby regulates circadian rhythms, emotional and locomotor activities as well as cognitive functions. This chain is Histamine H1 receptor, found in Rattus norvegicus (Rat).